The chain runs to 320 residues: Cytochrome f (320 aa).

Positions 1 to 35 (MQNRNTFSWVKEEMTRFISVSIMIYVITRTSISNA) are cleaved as a signal peptide. Residues Tyr36, Cys56, Cys59, and His60 each contribute to the heme site. Residues 286–306 (VQGLLFFLASVILAQIFLVLK) form a helical membrane-spanning segment.

Belongs to the cytochrome f family. As to quaternary structure, the 4 large subunits of the cytochrome b6-f complex are cytochrome b6, subunit IV (17 kDa polypeptide, petD), cytochrome f and the Rieske protein, while the 4 small subunits are PetG, PetL, PetM and PetN. The complex functions as a dimer. It depends on heme as a cofactor.

It is found in the plastid. The protein localises to the chloroplast thylakoid membrane. Its function is as follows. Component of the cytochrome b6-f complex, which mediates electron transfer between photosystem II (PSII) and photosystem I (PSI), cyclic electron flow around PSI, and state transitions. In Calycanthus floridus var. glaucus (Eastern sweetshrub), this protein is Cytochrome f.